Reading from the N-terminus, the 272-residue chain is Shikimate dehydrogenase (NADP(+)) (272 aa).

Shikimate-binding positions include 14–16 (SKS) and Thr61. Lys65 serves as the catalytic Proton acceptor. Glu77 lines the NADP(+) pocket. Asn86 and Asp102 together coordinate shikimate. Residues 126-130 (GAGGA), 149-154 (NRTVSR), and Met213 each bind NADP(+). Residue Tyr215 coordinates shikimate. Gly237 contributes to the NADP(+) binding site.

This sequence belongs to the shikimate dehydrogenase family. As to quaternary structure, homodimer.

The enzyme catalyses shikimate + NADP(+) = 3-dehydroshikimate + NADPH + H(+). The protein operates within metabolic intermediate biosynthesis; chorismate biosynthesis; chorismate from D-erythrose 4-phosphate and phosphoenolpyruvate: step 4/7. In terms of biological role, involved in the biosynthesis of the chorismate, which leads to the biosynthesis of aromatic amino acids. Catalyzes the reversible NADPH linked reduction of 3-dehydroshikimate (DHSA) to yield shikimate (SA). The polypeptide is Shikimate dehydrogenase (NADP(+)) (Escherichia coli (strain SMS-3-5 / SECEC)).